The following is a 1108-amino-acid chain: Folliculin-interacting protein 2 (1108 aa).

In terms of domain architecture, uDENN FNIP1/2-type spans 38-456 (FGLSDIRLLV…TVMPVDHPPI (419 aa)). Disordered stretches follow at residues 89 to 112 (QESSSSSGSSSSGSSSSHGFGGSL), 209 to 233 (RTGSNLAHSTPVDMPSRGQNEDRDS), 598 to 635 (SEGVNTSELGHKPEKNRCKRPEQNSEASSMGFQEAEPD), and 649 to 671 (QNDQEATQDCSSSPPSCEVPRVR). Residues 91 to 106 (SSSSSGSSSSGSSSSH) show a composition bias toward low complexity. S212 and S217 each carry phosphoserine. One can recognise a cDENN FNIP1/2-type domain in the interval 464 to 1034 (TSQSVNMLAK…VSSLLQSILQ (571 aa)). The interaction with PRKAA1 stretch occupies residues 540 to 905 (DDQVINGSKI…DEACVLALLE (366 aa)). Basic and acidic residues predominate over residues 606–620 (LGHKPEKNRCKRPEQ). Residues 652-663 (QEATQDCSSSPP) are compositionally biased toward polar residues. Residues S720, S721, and S723 each carry the phosphoserine modification. The region spanning 1044-1099 (FCIMHLEDRLQEMYLKSKMLSEYLRGHTRVHVKELSVVLGIESNDLPLLTAIASTH) is the dDENN FNIP1/2-type domain.

This sequence belongs to the FNIP family. As to quaternary structure, homodimer and homomultimer. Heterodimer and heteromultimer with FNIP1. Interacts (via C-terminus) with FLCN (via C-terminus). Phosphorylated FLCN is preferentially bound. Component of the lysosomal folliculin complex (LFC), composed of FLCN, FNIP1 (or FNIP2), RagA/RRAGA or RagB/RRAGB GDP-bound, RagC/RRAGC or RagD/RRAGD GTP-bound, and Ragulator. Interacts with PRKAA1, PRKAB1 and PRKAG1 subunits of 5'-AMP-activated protein kinase. Interacts with HSP70, HSP90AA1, STIP1, PTGES3, CDC37, BRAF, GCR and CDK4. Phosphorylated by AMPK.

The protein resides in the lysosome membrane. The protein localises to the cytoplasm. Binding partner of the GTPase-activating protein FLCN: involved in the cellular response to amino acid availability by regulating the non-canonical mTORC1 signaling cascade controlling the MiT/TFE factors TFEB and TFE3. Required to promote FLCN recruitment to lysosomes and interaction with Rag GTPases, leading to activation of the non-canonical mTORC1 signaling. In low-amino acid conditions, component of the lysosomal folliculin complex (LFC) on the membrane of lysosomes, which inhibits the GTPase-activating activity of FLCN, thereby inactivating mTORC1 and promoting nuclear translocation of TFEB and TFE3. Upon amino acid restimulation, disassembly of the LFC complex liberates the GTPase-activating activity of FLCN, leading to activation of mTORC1 and subsequent inactivation of TFEB and TFE3. Together with FLCN, regulates autophagy: following phosphorylation by ULK1, interacts with GABARAP and promotes autophagy. In addition to its role in mTORC1 signaling, also acts as a co-chaperone of HSP90AA1/Hsp90: inhibits the ATPase activity of HSP90AA1/Hsp90, leading to activate both kinase and non-kinase client proteins of HSP90AA1/Hsp90. Acts as a scaffold to load client protein FLCN onto HSP90AA1/Hsp90. Competes with the activating co-chaperone AHSA1 for binding to HSP90AA1, thereby providing a reciprocal regulatory mechanism for chaperoning of client proteins. May play a role in the signal transduction pathway of apoptosis induced by O6-methylguanine-mispaired lesions. The sequence is that of Folliculin-interacting protein 2 from Mus musculus (Mouse).